The sequence spans 869 residues: Leucine--tRNA ligase (869 aa).

The 'HIGH' region signature appears at 51 to 61 (PYPSGRIHMGH). The 'KMSKS' region signature appears at 636–640 (KMSKS). Position 639 (K639) interacts with ATP.

Belongs to the class-I aminoacyl-tRNA synthetase family.

Its subcellular location is the cytoplasm. The catalysed reaction is tRNA(Leu) + L-leucine + ATP = L-leucyl-tRNA(Leu) + AMP + diphosphate. This is Leucine--tRNA ligase from Dinoroseobacter shibae (strain DSM 16493 / NCIMB 14021 / DFL 12).